The chain runs to 347 residues: Melanoma-associated antigen B10 (347 aa).

A compositionally biased stretch (basic residues) spans 1–18 (MPRGQKSKLRAREKRRQA). 2 disordered regions span residues 1 to 20 (MPRG…QARG) and 56 to 92 (GASN…QMEE). Low complexity predominate over residues 67 to 78 (AQSTSTSATAAS). The span at 81–92 (RHPEGVNDQMEE) shows a compositional bias: basic and acidic residues. Positions 111–310 (VDEKVIILVH…SEFSNWYTEA (200 aa)) constitute an MAGE domain. The interval 328–347 (VSATAGARSKVKSSKSSQLQ) is disordered.

The polypeptide is Melanoma-associated antigen B10 (MAGEB10) (Homo sapiens (Human)).